The primary structure comprises 388 residues: Alpha-2A adrenergic receptor (388 aa).

Residues 1–22 lie on the Extracellular side of the membrane; the sequence is MICGANATNGTNATKEYTLLVA. N-linked (GlcNAc...) asparagine glycans are attached at residues asparagine 6, asparagine 9, and asparagine 12. Residues 23–48 form a helical membrane-spanning segment; it reads LPLSIAVGLLILLIIFGNVLVIIAVF. At 49–59 the chain is on the cytoplasmic side; sequence TSRALRAPQNL. A helical transmembrane segment spans residues 60-85; that stretch reads FLVSLASADILVATLVMPFSLANELM. Residues 86-95 are Extracellular-facing; that stretch reads GMWTFGGVWC. A disulfide bond links cysteine 95 and cysteine 169. The chain crosses the membrane as a helical span at residues 96-118; sequence EIYLALDVLFCTASITHLCAISL. At 119–138 the chain is on the cytoplasmic side; it reads DRYWSITQAIEYNLKRTPQR. A helical transmembrane segment spans residues 139–162; that stretch reads IKRIIFIVWIIAAVISCPPLITMK. The Extracellular segment spans residues 163–173; that stretch reads KSEGDICDINK. Residues 174 to 198 form a helical membrane-spanning segment; it reads EKWYIVSSCIGSFFLPCIIMVLVYI. Residues 199–311 are Cytoplasmic-facing; that stretch reads RIYQIAKKRT…RQNREKRFTF (113 aa). A disordered region spans residues 208–291; the sequence is TRAPPGDHRK…PGDGDKTEAC (84 aa). Positions 212–231 are enriched in basic and acidic residues; the sequence is PGDHRKNEVGKKENDPHEKL. Residues 266–275 show a composition bias toward basic residues; that stretch reads LKKKSSKGKT. A helical transmembrane segment spans residues 312-337; sequence VLAVVIGVFVICWFPFFFTYTFTAFC. Topologically, residues 338–344 are extracellular; sequence DCCVPET. A helical membrane pass occupies residues 345 to 368; the sequence is LFKFFFWFGYCNSSLNPIIYTIFN. At 369 to 388 the chain is on the cytoplasmic side; that stretch reads NDFRRSFKKILCRRDKRRVV. The S-palmitoyl cysteine moiety is linked to residue cysteine 380.

Belongs to the G-protein coupled receptor 1 family. Adrenergic receptor subfamily. ADRA2A sub-subfamily.

The protein localises to the cell membrane. Functionally, alpha-2 adrenergic receptors mediate the catecholamine-induced inhibition of adenylate cyclase through the action of G proteins. The order of potency for this receptor is dexmedetomidine &gt; oxymetazoline = epinephrine &gt; norepinephrine. The chain is Alpha-2A adrenergic receptor from Danio rerio (Zebrafish).